The sequence spans 355 residues: UDP-3-O-acylglucosamine N-acyltransferase (355 aa).

The Proton acceptor role is filled by His258.

This sequence belongs to the transferase hexapeptide repeat family. LpxD subfamily. As to quaternary structure, homotrimer.

It carries out the reaction a UDP-3-O-[(3R)-3-hydroxyacyl]-alpha-D-glucosamine + a (3R)-hydroxyacyl-[ACP] = a UDP-2-N,3-O-bis[(3R)-3-hydroxyacyl]-alpha-D-glucosamine + holo-[ACP] + H(+). It functions in the pathway bacterial outer membrane biogenesis; LPS lipid A biosynthesis. In terms of biological role, catalyzes the N-acylation of UDP-3-O-acylglucosamine using 3-hydroxyacyl-ACP as the acyl donor. Is involved in the biosynthesis of lipid A, a phosphorylated glycolipid that anchors the lipopolysaccharide to the outer membrane of the cell. The sequence is that of UDP-3-O-acylglucosamine N-acyltransferase from Bradyrhizobium sp. (strain ORS 278).